A 430-amino-acid chain; its full sequence is Serine--tRNA ligase (430 aa).

L-serine is bound at residue 237–239 (TAE). 268-270 (RSE) provides a ligand contact to ATP. Residue E291 participates in L-serine binding. Residue 355–358 (EISS) coordinates ATP. S391 is a binding site for L-serine.

The protein belongs to the class-II aminoacyl-tRNA synthetase family. Type-1 seryl-tRNA synthetase subfamily. As to quaternary structure, homodimer. The tRNA molecule binds across the dimer.

The protein localises to the cytoplasm. It carries out the reaction tRNA(Ser) + L-serine + ATP = L-seryl-tRNA(Ser) + AMP + diphosphate + H(+). The enzyme catalyses tRNA(Sec) + L-serine + ATP = L-seryl-tRNA(Sec) + AMP + diphosphate + H(+). The protein operates within aminoacyl-tRNA biosynthesis; selenocysteinyl-tRNA(Sec) biosynthesis; L-seryl-tRNA(Sec) from L-serine and tRNA(Sec): step 1/1. In terms of biological role, catalyzes the attachment of serine to tRNA(Ser). Is also able to aminoacylate tRNA(Sec) with serine, to form the misacylated tRNA L-seryl-tRNA(Sec), which will be further converted into selenocysteinyl-tRNA(Sec). This is Serine--tRNA ligase from Yersinia pseudotuberculosis serotype O:1b (strain IP 31758).